The chain runs to 67 residues: Large ribosomal subunit protein bL35 (67 aa).

The span at 1 to 16 shows a compositional bias: basic residues; sequence MPKMKTKSSAKKRFRV. The tract at residues 1–24 is disordered; that stretch reads MPKMKTKSSAKKRFRVRPGGTVKR.

Belongs to the bacterial ribosomal protein bL35 family.

In Paracidovorax citrulli (strain AAC00-1) (Acidovorax citrulli), this protein is Large ribosomal subunit protein bL35.